The primary structure comprises 214 residues: Adenylate kinase (214 aa).

10 to 15 (GAGKGT) is a binding site for ATP. The interval 30-59 (STGDILRAAVKDMTPMGGKAKSFMDAGALV) is NMP. Residues T31, R36, 57–59 (ALV), 85–88 (GFPR), and Q92 each bind AMP. The tract at residues 126–163 (GRRTCRNCGKGFHVSFDPPKSSGICDECSGELYQRDDD) is LID. R127 lines the ATP pocket. C130, C133, C150, and C153 together coordinate Zn(2+). Residues R160 and R171 each contribute to the AMP site. ATP is bound at residue G199.

This sequence belongs to the adenylate kinase family. In terms of assembly, monomer.

The protein localises to the cytoplasm. The catalysed reaction is AMP + ATP = 2 ADP. Its pathway is purine metabolism; AMP biosynthesis via salvage pathway; AMP from ADP: step 1/1. Its function is as follows. Catalyzes the reversible transfer of the terminal phosphate group between ATP and AMP. Plays an important role in cellular energy homeostasis and in adenine nucleotide metabolism. The polypeptide is Adenylate kinase (Geotalea daltonii (strain DSM 22248 / JCM 15807 / FRC-32) (Geobacter daltonii)).